The primary structure comprises 380 residues: Septin homolog spn4 (380 aa).

Positions 25-298 constitute a Septin-type G domain; the sequence is NGVAFTLMLC…EQYRQEQMKV (274 aa). The tract at residues 35 to 42 is G1 motif; the sequence is GESGLGKT. GTP-binding positions include 35-42, Thr-70, Gly-96, 175-183, Gly-231, and Arg-247; these read GESGLGKT and KADMYTRRD. The segment at 93-96 is G3 motif; the sequence is DTPG. Residues 174-177 form a G4 motif region; that stretch reads AKAD.

This sequence belongs to the TRAFAC class TrmE-Era-EngA-EngB-Septin-like GTPase superfamily. Septin GTPase family. As to quaternary structure, component of the septin complex composed of two copies of each spn1, spn2, spn3 and spn4.

The protein localises to the cytoplasm. It is found in the cell cortex. Its function is as follows. Plays a role in the cell cycle. Involved in a late stage of septum formation leading to the separation of the daughter cells. This Schizosaccharomyces pombe (strain 972 / ATCC 24843) (Fission yeast) protein is Septin homolog spn4 (spn4).